Here is a 774-residue protein sequence, read N- to C-terminus: Transcription factor MBS1 (774 aa).

Residues 37-143 form the HTH APSES-type domain; it reads EITFYDSGVP…YVPTSVSPPP (107 aa). Residues 68–89 constitute a DNA-binding region (H-T-H motif); that stretch reads ATQILKVAGFDKPQRTRVLERE. Disordered regions lie at residues 135-180 and 209-229; these read VPTS…SAAA and RVSL…VASV. Residues 155 to 165 show a composition bias toward basic and acidic residues; the sequence is ARRDKEKETGR. Polar residues predominate over residues 166–176; it reads TKATPSRTGPT. ANK repeat units follow at residues 348 to 377 and 467 to 496; these read DGHT…SIFA and EGET…NPKI. The disordered stretch occupies residues 752 to 774; sequence EEENDNQVYNTSAGESGPSSWVQ. Residues 757–774 show a composition bias toward polar residues; it reads NQVYNTSAGESGPSSWVQ.

Its subcellular location is the nucleus. Its function is as follows. Transcription factor that positively regulates ergosterol biosynthesis and thereby affects polyene and azole drug susceptibility. Plays a role in maintenance of membrane stability and osmotic stress response. Involved in genotoxic and oxidative stress responses. Also promotes production of melanin and capsule and thereby is required for full virulence. In Cryptococcus neoformans var. grubii serotype A (strain H99 / ATCC 208821 / CBS 10515 / FGSC 9487) (Filobasidiella neoformans var. grubii), this protein is Transcription factor MBS1.